We begin with the raw amino-acid sequence, 289 residues long: Urease accessory protein UreD (289 aa).

This sequence belongs to the UreD family. In terms of assembly, ureD, UreF and UreG form a complex that acts as a GTP-hydrolysis-dependent molecular chaperone, activating the urease apoprotein by helping to assemble the nickel containing metallocenter of UreC. The UreE protein probably delivers the nickel.

It is found in the cytoplasm. Its function is as follows. Required for maturation of urease via the functional incorporation of the urease nickel metallocenter. This chain is Urease accessory protein UreD, found in Cupriavidus necator (strain ATCC 17699 / DSM 428 / KCTC 22496 / NCIMB 10442 / H16 / Stanier 337) (Ralstonia eutropha).